A 96-amino-acid polypeptide reads, in one-letter code: Nucleoid-associated protein TC_0612 (96 aa).

Belongs to the YbaB/EbfC family. As to quaternary structure, homodimer.

The protein resides in the cytoplasm. Its subcellular location is the nucleoid. Binds to DNA and alters its conformation. May be involved in regulation of gene expression, nucleoid organization and DNA protection. The chain is Nucleoid-associated protein TC_0612 from Chlamydia muridarum (strain MoPn / Nigg).